Consider the following 476-residue polypeptide: Methylenetetrahydrofolate--tRNA-(uracil-5-)-methyltransferase TrmFO (476 aa).

14-19 (GGGLAG) serves as a coordination point for FAD.

The protein belongs to the MnmG family. TrmFO subfamily. Requires FAD as cofactor.

Its subcellular location is the cytoplasm. It catalyses the reaction uridine(54) in tRNA + (6R)-5,10-methylene-5,6,7,8-tetrahydrofolate + NADH + H(+) = 5-methyluridine(54) in tRNA + (6S)-5,6,7,8-tetrahydrofolate + NAD(+). The enzyme catalyses uridine(54) in tRNA + (6R)-5,10-methylene-5,6,7,8-tetrahydrofolate + NADPH + H(+) = 5-methyluridine(54) in tRNA + (6S)-5,6,7,8-tetrahydrofolate + NADP(+). Catalyzes the folate-dependent formation of 5-methyl-uridine at position 54 (M-5-U54) in all tRNAs. The chain is Methylenetetrahydrofolate--tRNA-(uracil-5-)-methyltransferase TrmFO from Brucella anthropi (strain ATCC 49188 / DSM 6882 / CCUG 24695 / JCM 21032 / LMG 3331 / NBRC 15819 / NCTC 12168 / Alc 37) (Ochrobactrum anthropi).